A 336-amino-acid chain; its full sequence is Fructose-1,6-bisphosphatase class 1 (336 aa).

Glutamate 90, aspartate 112, leucine 114, and aspartate 115 together coordinate Mg(2+). Residues aspartate 115–serine 118, asparagine 211, and lysine 277 each bind substrate. A Mg(2+)-binding site is contributed by glutamate 283.

Belongs to the FBPase class 1 family. As to quaternary structure, homotetramer. Mg(2+) is required as a cofactor.

The protein localises to the cytoplasm. The catalysed reaction is beta-D-fructose 1,6-bisphosphate + H2O = beta-D-fructose 6-phosphate + phosphate. It participates in carbohydrate biosynthesis; gluconeogenesis. The sequence is that of Fructose-1,6-bisphosphatase class 1 from Pseudomonas fluorescens (strain SBW25).